The primary structure comprises 428 residues: Keratin, type I cytoskeletal 18-A (428 aa).

The interval 2 to 78 (SSSRSVYSSS…NVNLFGGVQN (77 aa)) is head. The segment at 24 to 45 (SAPRFTPGSSAASVHAGAGGSG) is disordered. The interval 79-114 (EKETMQDLNDRLASYLERVRSLESANKKLEVQIRQH) is coil 1A. Residues 79-389 (EKETMQDLND…RLLEGDSFDL (311 aa)) form the IF rod domain. The tract at residues 115-130 (TEKKGPAKDWSPYYMT) is linker 1. The tract at residues 131 to 222 (IEDLKKQVFN…KNHQDDVNEL (92 aa)) is coil 1B. The tract at residues 223 to 246 (QAQIASSAVTVEVDAPKSQDLGKI) is linker 12. The tract at residues 247-384 (MADLRAQYDE…IQTYRRLLEG (138 aa)) is coil 2. Positions 385–428 (DSFDLQDAVPVVTTQTVKKVITTTQRLVDGKVVAESNNTEVIKS) are tail.

It belongs to the intermediate filament family. In terms of assembly, heterotetramer of two type I and two type II keratins. Keratin-18 associates with keratin-8. Proteolytically cleaved by caspases during epithelial cell apoptosis. Expressed at high levels in notochord and low levels in adult liver.

Its function is as follows. When phosphorylated, plays a role in filament reorganization. In Xenopus laevis (African clawed frog), this protein is Keratin, type I cytoskeletal 18-A (krt18-a).